The chain runs to 356 residues: UDP-N-acetylglucosamine--N-acetylmuramyl-(pentapeptide) pyrophosphoryl-undecaprenol N-acetylglucosamine transferase (356 aa).

Residues Arg-166, Ser-196, and Gln-290 each contribute to the UDP-N-acetyl-alpha-D-glucosamine site.

This sequence belongs to the glycosyltransferase 28 family. MurG subfamily.

The protein localises to the cell membrane. The enzyme catalyses Mur2Ac(oyl-L-Ala-gamma-D-Glu-L-Lys-D-Ala-D-Ala)-di-trans,octa-cis-undecaprenyl diphosphate + UDP-N-acetyl-alpha-D-glucosamine = beta-D-GlcNAc-(1-&gt;4)-Mur2Ac(oyl-L-Ala-gamma-D-Glu-L-Lys-D-Ala-D-Ala)-di-trans,octa-cis-undecaprenyl diphosphate + UDP + H(+). It participates in cell wall biogenesis; peptidoglycan biosynthesis. Functionally, cell wall formation. Catalyzes the transfer of a GlcNAc subunit on undecaprenyl-pyrophosphoryl-MurNAc-pentapeptide (lipid intermediate I) to form undecaprenyl-pyrophosphoryl-MurNAc-(pentapeptide)GlcNAc (lipid intermediate II). The chain is UDP-N-acetylglucosamine--N-acetylmuramyl-(pentapeptide) pyrophosphoryl-undecaprenol N-acetylglucosamine transferase from Staphylococcus aureus (strain bovine RF122 / ET3-1).